Here is a 96-residue protein sequence, read N- to C-terminus: Protein RSI-1 (96 aa).

Residues 1–29 (MAKSGYNASFLLLISMFLILLTFSNVVEG) form the signal peptide.

The protein belongs to the GASA family. In terms of processing, six disulfide bonds may be present. As to expression, expressed very early in lateral root development.

It localises to the secreted. The chain is Protein RSI-1 (RSI-1) from Solanum lycopersicum (Tomato).